The primary structure comprises 740 residues: MPEDRPIEDSPPIGEAQTDAPAGGCPAGFGRIKPPVAGGSNXDWWPNQLNMKILQKNPDVINPLDEDFDYRSAVQNLDVDALRADIVEVMHTSQDWWPADFGHYGPLFIRMAWHAAGTYRVSDGRGGAGAGMQRFAPLNSWPDNASLDKARRLLWPVKKKYGKNLSWADLIVYAGNVALEDMGFRTAGFAFGREDRWEPEEDVYWGPEQEWLDRTKRYTGERDLENPLAAVQMGLIYVNPEGPNGNPDPQASAIDIRETFGRMAMNDVETAALIVGGHTFGKTHGNGDASLVGPEPEAAPLEEVGLGWRNPQGTGVGKDAITSGLEVTWTHTPTKWDNSFLEILYGNEWELTKSPAGANQWKPKDNGWANSVPLAHEDGKTHPSMLTSDLALRVDPIYEQITRRWLDHPEELAEEFAKAWFKLLHRDMGPVTRYLGPEVPKDTWLWQDNIPAGNDLSDDEVAKLKELIADSGLTVSQLVSTAWKAASTFRSSDLRGGANGGRIRLQPQLGWEANEPDELAQVVRKYEEIQKASGINVSFADLVVLGGNVGVEKAAKAAGFDVTVPFTPGRGDATQEETDVDSFAYLEPKADGFRNYLGKGSDLPAEFKLIDRANLLGLSAPEMTTLVGGLRVLDVNHGGTKHGVLTDKPGALTTDFFVNLLDMSTAWKPSPADDGTYIGTDRATGSPKWTGTRVDLVFASNSQLRALAEVYAEDDSKEKFVKDFVAAWTKVMDADRFDVA.

Positions 1–32 are disordered; that stretch reads MPEDRPIEDSPPIGEAQTDAPAGGCPAGFGRI. Residues 113 to 237 constitute a cross-link (tryptophyl-tyrosyl-methioninium (Trp-Tyr) (with M-263)); the sequence is WHAAGTYRVS…LAAVQMGLIY (125 aa). Catalysis depends on His114, which acts as the Proton acceptor. The segment at residues 237 to 263 is a cross-link (tryptophyl-tyrosyl-methioninium (Tyr-Met) (with W-113)); sequence YVNPEGPNGNPDPQASAIDIRETFGRM. Position 278 (His278) interacts with heme b.

Belongs to the peroxidase family. Peroxidase/catalase subfamily. In terms of assembly, homodimer or homotetramer. It depends on heme b as a cofactor. Formation of the three residue Trp-Tyr-Met cross-link is important for the catalase, but not the peroxidase activity of the enzyme.

The catalysed reaction is H2O2 + AH2 = A + 2 H2O. It catalyses the reaction 2 H2O2 = O2 + 2 H2O. Its function is as follows. Bifunctional enzyme with both catalase and broad-spectrum peroxidase activity. May play a role in the intracellular survival of mycobacteria. This is Catalase-peroxidase from Mycolicibacterium smegmatis (Mycobacterium smegmatis).